The sequence spans 601 residues: DNA ligase 2 (601 aa).

Residue Glu263 participates in ATP binding. Catalysis depends on Lys265, which acts as the N6-AMP-lysine intermediate. The ATP site is built by Arg270, Arg285, Glu314, Phe354, Arg432, and Lys438.

Belongs to the ATP-dependent DNA ligase family. It depends on Mg(2+) as a cofactor.

The catalysed reaction is ATP + (deoxyribonucleotide)n-3'-hydroxyl + 5'-phospho-(deoxyribonucleotide)m = (deoxyribonucleotide)n+m + AMP + diphosphate.. Functionally, DNA ligase that seals nicks in double-stranded DNA during DNA replication, DNA recombination and DNA repair. The polypeptide is DNA ligase 2 (Thermofilum pendens (strain DSM 2475 / Hrk 5)).